A 236-amino-acid polypeptide reads, in one-letter code: EP300-interacting inhibitor of differentiation 2 (236 aa).

Positions 1–15 (MSQLPAVSSAPQTGA) are enriched in polar residues. A disordered region spans residues 1–102 (MSQLPAVSSA…REGPAAAAAS (102 aa)). Composition is skewed to low complexity over residues 32–68 (RALP…GRVA) and 75–102 (AAAA…AAAS). 2 positions are modified to omega-N-methylarginine: Arg63 and Arg79. Positions 170–190 (RIQELEERRRRFVEACRAREA) form a coiled coil.

In terms of assembly, heterodimer with EID2B. Interacts with the C-terminus of EP300. Interacts with HDAC1 and HDAC2. Interacts with SMAD2, SMAD4 and with the MH2 domain of SMAD3. Expressed in heart, brain, kidney and pancreas. Not detected in placenta.

The protein resides in the nucleus. Interacts with EP300 and acts as a repressor of MYOD-dependent transcription and muscle differentiation. Inhibits EP300 histone acetyltransferase activity. Acts as a repressor of TGFB/SMAD transcriptional responses. May act as a repressor of the TGFB/SMAD3-dependent signaling by selectively blocking formation of TGFB-induced SMAD3-SMAD4 complex. This Mus musculus (Mouse) protein is EP300-interacting inhibitor of differentiation 2.